Consider the following 561-residue polypeptide: Microtubule-associated protein VP6 (561 aa).

In terms of assembly, interacts with VP2.

Its subcellular location is the virion. The protein resides in the host cytoplasm. It localises to the host cytoskeleton. Minor inner capsid component. Displays NTPase and RNA 5'-triphosphatase (RTPase) activities. May function as a cofactor of polymerase VP2. Associates with microtubules and plays a role in the formation, structural organization and morphology of viral inclusions, where the assembly of cores and the replication of viral RNA occur. This is Microtubule-associated protein VP6 (S6) from Lymantria dispar cypovirus 1 (isolate Rao) (LdCPV-1).